We begin with the raw amino-acid sequence, 1933 residues long: Protein TIC 214 (1933 aa).

6 helical membrane-spanning segments follow: residues 18–38 (IVNSVVVVGLYYGLLTTFSIG), 60–80 (ATTGFITGQLIMFISIYYAPL), 87–107 (PHTITVLALPYLFVYFIFYTD), 128–148 (FSIQCVFLNNLIFQLFNHFIL), 176–196 (VGWLIGHILFWKWLGLVLVWI), and 230–250 (IFYILVILIWFYLGGKIPAPL). Disordered stretches follow at residues 266–291 (AKGKKKKRGKGEEEGDVEKEDEVGVG), 473–514 (KTKS…SRDN), 808–832 (THREEKKKRKKDEKNEKNAKNAEDP), and 1066–1121 (ESFT…SSNA). Acidic residues predominate over residues 278 to 289 (EEGDVEKEDEVG). Residues 476 to 487 (SLSPEKTSGDNL) are compositionally biased toward polar residues. 2 stretches are compositionally biased toward basic and acidic residues: residues 488–514 (ETSRDNLETSRDNLETSRDNLETSRDN) and 819–832 (DEKNEKNAKNAEDP). The span at 1066–1078 (ESFTQISSPSSTN) shows a compositional bias: polar residues. The span at 1105–1115 (KEKKKKKRSLK) shows a compositional bias: basic residues. The helical transmembrane segment at 1135–1155 (LPVYLKLFIQRIYTGIFFSII) threads the bilayer. The tract at residues 1562–1642 (NADNEKNEKK…SAESTTKKVT (81 aa)) is disordered. The span at 1564–1642 (DNEKNEKKEA…SAESTTKKVT (79 aa)) shows a compositional bias: basic and acidic residues.

This sequence belongs to the TIC214 family. In terms of assembly, part of the Tic complex.

It is found in the plastid. The protein resides in the chloroplast inner membrane. In terms of biological role, involved in protein precursor import into chloroplasts. May be part of an intermediate translocation complex acting as a protein-conducting channel at the inner envelope. The sequence is that of Protein TIC 214 from Jasminum nudiflorum (Winter jasmine).